The sequence spans 350 residues: tRNA uridine(34) hydroxylase (350 aa).

One can recognise a Rhodanese domain in the interval 146 to 240 (DDPDAVFIDM…YARKAREQGL (95 aa)). Catalysis depends on cysteine 200, which acts as the Cysteine persulfide intermediate. Residues 314-350 (PEEEQRRRRAGRENGNKIFNKSRGRLNTQLGIPDPAE) form a disordered region. Basic and acidic residues predominate over residues 316–328 (EEQRRRRAGRENG).

Belongs to the TrhO family.

The enzyme catalyses uridine(34) in tRNA + AH2 + O2 = 5-hydroxyuridine(34) in tRNA + A + H2O. In terms of biological role, catalyzes oxygen-dependent 5-hydroxyuridine (ho5U) modification at position 34 in tRNAs. The polypeptide is tRNA uridine(34) hydroxylase (Citrobacter koseri (strain ATCC BAA-895 / CDC 4225-83 / SGSC4696)).